We begin with the raw amino-acid sequence, 515 residues long: Fatty acyl-CoA reductase 1 (515 aa).

Residues 1-465 (MLSIPEFYQG…ARKHLNKLRN (465 aa)) are Cytoplasmic-facing. A helical transmembrane segment spans residues 466-484 (IRYGFNTILVVLIWRVFIA). Over 485-515 (RSQMARNIWYFVVSMCFKFLSYFRASSTMRY) the chain is Peroxisomal.

Belongs to the fatty acyl-CoA reductase family.

It is found in the peroxisome membrane. It carries out the reaction a long-chain fatty acyl-CoA + 2 NADPH + 2 H(+) = a long-chain primary fatty alcohol + 2 NADP(+) + CoA. It catalyses the reaction hexadecanoyl-CoA + 2 NADPH + 2 H(+) = hexadecan-1-ol + 2 NADP(+) + CoA. The catalysed reaction is octadecanoyl-CoA + 2 NADPH + 2 H(+) = octadecan-1-ol + 2 NADP(+) + CoA. The enzyme catalyses (9Z)-octadecenoyl-CoA + 2 NADPH + 2 H(+) = (9Z)-octadecen-1-ol + 2 NADP(+) + CoA. It carries out the reaction (9Z,12Z)-octadecadienoyl-CoA + 2 NADPH + 2 H(+) = (9Z,12Z)-octadecadien-1-ol + 2 NADP(+) + CoA. It catalyses the reaction eicosanoyl-CoA + 2 NADPH + 2 H(+) = eicosan-1-ol + 2 NADP(+) + CoA. The catalysed reaction is 16-methylheptadecanoyl-CoA + 2 NADPH + 2 H(+) = 16-methylheptadecan-1-ol + 2 NADP(+) + CoA. The enzyme catalyses 18-methylnonadecanoyl-CoA + 2 NADPH + 2 H(+) = 18-methylnonadecan-1-ol + 2 NADP(+) + CoA. Its function is as follows. Catalyzes the reduction of saturated and unsaturated C16 or C18 fatty acyl-CoA to fatty alcohols. It plays an essential role in the production of ether lipids/plasmalogens which synthesis requires fatty alcohols. In parallel, it is also required for wax monoesters production since fatty alcohols also constitute a substrate for their synthesis. The sequence is that of Fatty acyl-CoA reductase 1 (far1) from Xenopus laevis (African clawed frog).